The following is a 289-amino-acid chain: Borealin (289 aa).

Residues 1-58 (MAPKKRSSRGTRTNTLRSRKLASFLKDFDREVQVRTKQIESDRQTLLKEVENLYNIEI) form a required for interaction with INCENP region. The tract at residues 1-88 (MAPKKRSSRG…NKQALEEAAK (88 aa)) is required for centromere localization. Residues 1–150 (MAPKKRSSRG…KKSHKNLRSA (150 aa)) are required for interaction with SENP3. Residues 10–109 (GTRTNTLRSR…TAEAIQTPLK (100 aa)) are required to form a minimal CPC core complex that localizes to the central spindle and midbody and properly executes the role of the CPC during cytokinesis. A required for interaction with INCENP and BIRC5 region spans residues 20-78 (KLASFLKDFDREVQVRTKQIESDRQTLLKEVENLYNIEILRLPKALQGMKWLDYFALGG). R91 bears the Citrulline mark. At T94 the chain carries Phosphothreonine; by TTK. T106 carries the phosphothreonine modification. S110 bears the Phosphoserine mark. Residues 122–173 (SIKEEEEEEEEGGGGGGRTKKSHKNLRSAKVKRCLPSKKRTQSIQGRGRSKR) are disordered. Residues 123-133 (IKEEEEEEEEG) show a composition bias toward acidic residues. A compositionally biased stretch (basic residues) spans 139 to 162 (RTKKSHKNLRSAKVKRCLPSKKRT). A Glycyl lysine isopeptide (Lys-Gly) (interchain with G-Cter in SUMO2) cross-link involves residue K145. S175 carries the phosphoserine modification. 2 positions are modified to phosphothreonine: T198 and T213. S228, S233, S247, and S253 each carry phosphoserine.

The protein belongs to the borealin family. As to quaternary structure, may form homooligomers and homodimers. Component of the chromosomal passenger complex (CPC) composed of at least BIRC5/survivin, CDCA8/borealin, INCENP, AURKB or AURKC; in the complex forms a triple-helix bundle-based subcomplex with INCENP and BIRC5. Interacts with SENP3, UBE2I and RANBP2. Interacts (phosphorylated) with SGO1 and SGO2A; the association is dependent on CDK1. Phosphorylated by TTK, essentially at Thr-94. Phosphorylation (probably by CDK1) promotes targeting of the CPC to centromeric DNA. Post-translationally, sumoylated by UBE2I and RANBP2. Desumoylated by SENP3 through the removal of SUMO2 and SUMO3. In terms of processing, citrullinated by PADI4.

Its subcellular location is the nucleus. The protein localises to the nucleolus. It localises to the cytoplasm. It is found in the chromosome. The protein resides in the centromere. Its subcellular location is the cytoskeleton. The protein localises to the spindle. In terms of biological role, component of the chromosomal passenger complex (CPC), a complex that acts as a key regulator of mitosis. The CPC complex has essential functions at the centromere in ensuring correct chromosome alignment and segregation and is required for chromatin-induced microtubule stabilization and spindle assembly. In the complex, it may be required to direct the CPC to centromeric DNA. Major effector of the TTK kinase in the control of attachment-error-correction and chromosome alignment. This chain is Borealin (Cdca8), found in Mus musculus (Mouse).